A 117-amino-acid chain; its full sequence is uncharacterized protein (117 aa).

The protein resides in the plastid. Its subcellular location is the chloroplast. This is an uncharacterized protein from Chlamydomonas reinhardtii (Chlamydomonas smithii).